A 265-amino-acid chain; its full sequence is MKLLISNDDGISALGIRTLANALAEVGHDVTVVCPDRERSATGHGLTLHQPIRAEIVESIFHPAIKAWACDGTPSDCVKLALWALLDSPPDLVLSGINQGANLGTEILYSGTVSAAMEGMIEGIPSIAFSLTSHISRNFQPAAKFATILVEQLAAKPIPDLMLLNVNIPPVEWEEIAGVKLTRQGVRRYVDVFDKRTDPRGKTYYWLTGEVLEEVEPPEGLNLPQNVPIDVHAVKDNYISITPLQYNLTYATALDKLSNWNFPMS.

Residues Asp8, Asp9, Ser40, and Asn98 each contribute to the a divalent metal cation site.

It belongs to the SurE nucleotidase family. A divalent metal cation is required as a cofactor.

Its subcellular location is the cytoplasm. It carries out the reaction a ribonucleoside 5'-phosphate + H2O = a ribonucleoside + phosphate. Its function is as follows. Nucleotidase that shows phosphatase activity on nucleoside 5'-monophosphates. In Trichormus variabilis (strain ATCC 29413 / PCC 7937) (Anabaena variabilis), this protein is 5'-nucleotidase SurE.